Here is a 210-residue protein sequence, read N- to C-terminus: MGQKVNPIGFRLGVIKTWDSKWYAEADFAKNLHEDLKIRQFLKKRLYSAGISKIEIERAANKTKINIHAARPGLIIGKKGAEVELLKKDLAAITSKEVFININEVRKPELDAQLVAENVALQLERRIAFRRAMKKSVTSSLKFGAKGIRITCSGRLGGAEMSRTEWYREGRVPLHTLRADIDYGFAEAKTTYGIIGVKVLIFKGEVLPGQ.

In terms of domain architecture, KH type-2 spans 38 to 106; it reads IRQFLKKRLY…EVFININEVR (69 aa).

This sequence belongs to the universal ribosomal protein uS3 family. Part of the 30S ribosomal subunit. Forms a tight complex with proteins S10 and S14.

In terms of biological role, binds the lower part of the 30S subunit head. Binds mRNA in the 70S ribosome, positioning it for translation. The sequence is that of Small ribosomal subunit protein uS3 from Trichlorobacter lovleyi (strain ATCC BAA-1151 / DSM 17278 / SZ) (Geobacter lovleyi).